The sequence spans 1119 residues: Period circadian protein homolog 3 (1119 aa).

Residues 1-48 (MDPCGNPAVPGGDCPQTRGPGLQGSSGQEGPLQGICVDSSHSEHEDRN) form a disordered region. The Nuclear export signal 1 motif lies at 54–63 (LIMVVQEMKK). 2 PAS domains span residues 120–187 (LASE…PTQL) and 259–325 (YEAP…KVLK). A PAC domain is found at 334 to 377 (HSPIRFCTQNGDYVILDSSWSSFVNPWSRKVSFIIGRHKVRTSP). Positions 400-409 (LQEQIHRLLL) match the Nuclear export signal 3 motif. Over residues 419–428 (GYGSLGSSGS) the composition is skewed to low complexity. 4 disordered regions span residues 419–449 (GYGS…VEEA), 483–530 (VKPV…SSSY), 718–744 (HSRC…SSSS), and 878–910 (LEPT…SRSS). 2 stretches are compositionally biased toward polar residues: residues 429 to 442 (QEQH…SESS) and 491 to 515 (TEPQ…STDT). Positions 551–750 (LKRKCISCTN…SSSSAHLCPH (200 aa)) are CSNK1E binding domain. A Nuclear localization signal motif is present at residues 720 to 739 (RCAGSERRKHKRKKLPTPVD). The segment covering 885–903 (HGPRRVEENWETHSEEEHP) has biased composition (basic and acidic residues). Serine 907 carries the phosphoserine modification. The Nuclear export signal 2 motif lies at 913-920 (LQLNLLQE). The interval 947 to 1011 (GNSGSRSPPC…QDTHRDRAFS (65 aa)) is disordered. Residues 970–988 (SPSAAASGSSASSVHGSGS) are compositionally biased toward low complexity. Residues 989–1001 (DYTSEVSENGQRS) show a composition bias toward polar residues. A CRY binding domain region spans residues 1037–1119 (ERGRDTVLRE…VQQKTPVEQL (83 aa)).

As to quaternary structure, homodimer. Component of the circadian core oscillator, which includes the CRY proteins, CLOCK or NPAS2, BMAL1 or BMAL2, CSNK1D and/or CSNK1E, TIMELESS and the PER proteins. Interacts directly with PER1, PER2, CRY1, CRY2, and TIMELESS; interaction with CRY1 and CRY2 is weak and not rhythmic. Interacts with FBXW11 and BTRC. Post-translationally, phosphorylation by CSNK1E is weak and appears to require association with PER1 and translocation to the nucleus. Ubiquitinated.

It localises to the cytoplasm. The protein localises to the nucleus. Originally described as a core component of the circadian clock. The circadian clock, an internal time-keeping system, regulates various physiological processes through the generation of approximately 24 hour circadian rhythms in gene expression, which are translated into rhythms in metabolism and behavior. It is derived from the Latin roots 'circa' (about) and 'diem' (day) and acts as an important regulator of a wide array of physiological functions including metabolism, sleep, body temperature, blood pressure, endocrine, immune, cardiovascular, and renal function. Consists of two major components: the central clock, residing in the suprachiasmatic nucleus (SCN) of the brain, and the peripheral clocks that are present in nearly every tissue and organ system. Both the central and peripheral clocks can be reset by environmental cues, also known as Zeitgebers (German for 'timegivers'). The predominant Zeitgeber for the central clock is light, which is sensed by retina and signals directly to the SCN. The central clock entrains the peripheral clocks through neuronal and hormonal signals, body temperature and feeding-related cues, aligning all clocks with the external light/dark cycle. Circadian rhythms allow an organism to achieve temporal homeostasis with its environment at the molecular level by regulating gene expression to create a peak of protein expression once every 24 hours to control when a particular physiological process is most active with respect to the solar day. Transcription and translation of core clock components (CLOCK, NPAS2, BMAL1, BMAL2, PER1, PER2, PER3, CRY1 and CRY2) plays a critical role in rhythm generation, whereas delays imposed by post-translational modifications (PTMs) are important for determining the period (tau) of the rhythms (tau refers to the period of a rhythm and is the length, in time, of one complete cycle). A diurnal rhythm is synchronized with the day/night cycle, while the ultradian and infradian rhythms have a period shorter and longer than 24 hours, respectively. Disruptions in the circadian rhythms contribute to the pathology of cardiovascular diseases, cancer, metabolic syndromes and aging. A transcription/translation feedback loop (TTFL) forms the core of the molecular circadian clock mechanism. Transcription factors, CLOCK or NPAS2 and BMAL1 or BMAL2, form the positive limb of the feedback loop, act in the form of a heterodimer and activate the transcription of core clock genes and clock-controlled genes (involved in key metabolic processes), harboring E-box elements (5'-CACGTG-3') within their promoters. The core clock genes: PER1/2/3 and CRY1/2 which are transcriptional repressors form the negative limb of the feedback loop and interact with the CLOCK|NPAS2-BMAL1|BMAL2 heterodimer inhibiting its activity and thereby negatively regulating their own expression. This heterodimer also activates nuclear receptors NR1D1, NR1D2, RORA, RORB and RORG, which form a second feedback loop and which activate and repress BMAL1 transcription, respectively. Has a redundant role with the other PER proteins PER1 and PER2 and is not essential for the circadian rhythms maintenance. In contrast, plays an important role in sleep-wake timing and sleep homeostasis probably through the transcriptional regulation of sleep homeostasis-related genes, without influencing circadian parameters. Can bind heme. The sequence is that of Period circadian protein homolog 3 (Per3) from Rattus norvegicus (Rat).